Consider the following 26-residue polypeptide: Aralin B chain (26 aa).

As to quaternary structure, disulfide-linked dimer of A and B chains. Glycosylated. High-mannose type oligosaccharides.

Lectin specific for galactose (Gal) and its derivatives. Induces apoptosis. Has cytotoxic activity against several human cancer cell lines. Is less cytotoxic to normal human cells. This Aralia elata (Japanese angelica tree) protein is Aralin B chain.